The following is a 61-amino-acid chain: Small ribosomal subunit protein uS14 (61 aa).

Acidic residues predominate over residues 1 to 12 (MSESETTDEPDS). A disordered region spans residues 1 to 25 (MSESETTDEPDSETASSERTGQLES). Zn(2+) is bound by residues Cys-26, Cys-29, Cys-44, and Cys-47.

This sequence belongs to the universal ribosomal protein uS14 family. Zinc-binding uS14 subfamily. As to quaternary structure, part of the 30S ribosomal subunit. Requires Zn(2+) as cofactor.

In terms of biological role, binds 16S rRNA, required for the assembly of 30S particles. This is Small ribosomal subunit protein uS14 from Haloarcula marismortui (strain ATCC 43049 / DSM 3752 / JCM 8966 / VKM B-1809) (Halobacterium marismortui).